Reading from the N-terminus, the 522-residue chain is Serine/threonine-protein kinase pak-2 (522 aa).

In terms of domain architecture, CRIB spans 16–29 (ISTPSNFEHRIHAG). The span at 183–204 (TTTPQLQPKSPSTPQAMRQQPK) shows a compositional bias: polar residues. A disordered region spans residues 183 to 208 (TTTPQLQPKSPSTPQAMRQQPKCTEG). Positions 231 to 482 (LTDYKQIGEG…AKDLLRHPFF (252 aa)) constitute a Protein kinase domain. Residues 237-245 (IGEGSTGVV) and Lys-260 each bind ATP. Asp-350 functions as the Proton acceptor in the catalytic mechanism.

This sequence belongs to the protein kinase superfamily. STE Ser/Thr protein kinase family. STE20 subfamily. The cofactor is Mg(2+). It depends on Mn(2+) as a cofactor. Expressed in pharynx, vulva and spermatheca. Unlike other p21-activated kinases, expression is not detected in neurons.

The enzyme catalyses L-seryl-[protein] + ATP = O-phospho-L-seryl-[protein] + ADP + H(+). The catalysed reaction is L-threonyl-[protein] + ATP = O-phospho-L-threonyl-[protein] + ADP + H(+). Its function is as follows. Serine/threonine-protein kinase which plays a redundant role with pak-1 in embryogenesis but, in contrast to pak-1, is not involved in commissural axon guidance of ventral cord motoneurons or in distal tip cell (DTC) migration. In Caenorhabditis elegans, this protein is Serine/threonine-protein kinase pak-2.